The primary structure comprises 436 residues: YRLTYYTPDYQVAETDILAAFRMTPQPGVPAEECGAAVAAESSTGTWTTVWTDGLTQLDRYKGRCYDLEPVPGETNQYIAYVAYPIDLFEEGSVTNLLTSIVGNVFGFKALRALRLEDLRIPPAYVKTFWGPPHGIQVERDRLNKYGRPLLGCTIKPKLGLSAKNYGRAVYECLRGGLDFTKDDENVNSQSFMRWRDRFLFCAEAIYKAQSETGEVKGHYLNATAGTVEEMYKRAAFAAQLGVPIIMHDYLTGGFTANTSLAMYCRDNGLLLHIHRAMHAVIDRQRYHGIHFRVLAKTLRMSGGDHLHSGTVVGKLEGEREVTLGFVDLMRDAYVEKDRSRGIYFTQDWCGMGGTIPVASGGIHVWHMPALTEIFGDDACLQFGGGTLGHPWGNAPGAVANRVASEACVQARNEGRDLSREGGDVIREACKWSPEL.

Residues Asn104 and Thr154 each coordinate substrate. Catalysis depends on Lys156, which acts as the Proton acceptor. Lys158 provides a ligand contact to substrate. Lys182, Asp184, and Glu185 together coordinate Mg(2+). N6-carboxylysine is present on Lys182. The active-site Proton acceptor is the His275. Residues Arg276, His308, and Ser360 each coordinate substrate.

It belongs to the RuBisCO large chain family. Type I subfamily. As to quaternary structure, heterohexadecamer of 8 large chains and 8 small chains. The cofactor is Mg(2+).

The protein localises to the plastid. The protein resides in the chloroplast. The catalysed reaction is 2 (2R)-3-phosphoglycerate + 2 H(+) = D-ribulose 1,5-bisphosphate + CO2 + H2O. The enzyme catalyses D-ribulose 1,5-bisphosphate + O2 = 2-phosphoglycolate + (2R)-3-phosphoglycerate + 2 H(+). Functionally, ruBisCO catalyzes two reactions: the carboxylation of D-ribulose 1,5-bisphosphate, the primary event in carbon dioxide fixation, as well as the oxidative fragmentation of the pentose substrate in the photorespiration process. Both reactions occur simultaneously and in competition at the same active site. The polypeptide is Ribulose bisphosphate carboxylase large chain (Euglena myxocylindracea).